A 267-amino-acid polypeptide reads, in one-letter code: 2-keto-3-deoxy-L-rhamnonate aldolase (267 aa).

His-49 serves as the catalytic Proton acceptor. A substrate-binding site is contributed by Gln-151. Glu-153 serves as a coordination point for Mg(2+). Substrate-binding residues include Ala-178 and Asp-179. Asp-179 contributes to the Mg(2+) binding site.

The protein belongs to the HpcH/HpaI aldolase family. KDR aldolase subfamily. In terms of assembly, homohexamer. The cofactor is Mg(2+).

It carries out the reaction 2-dehydro-3-deoxy-L-rhamnonate = (S)-lactaldehyde + pyruvate. Functionally, catalyzes the reversible retro-aldol cleavage of 2-keto-3-deoxy-L-rhamnonate (KDR) to pyruvate and lactaldehyde. This Salmonella dublin (strain CT_02021853) protein is 2-keto-3-deoxy-L-rhamnonate aldolase.